Reading from the N-terminus, the 593-residue chain is Solute carrier family 40 member 3, chloroplastic (593 aa).

The disordered stretch occupies residues 1–23 (MSMSKLLSPPPTSPPGPALSRLP). A chloroplast-targeting transit peptide spans 1–51 (MSMSKLLSPPPTSPPGPALSRLPCRRVAPPPVLPFPFPLRRLTSRRVFATS). Residues 8-17 (SPPPTSPPGP) are compositionally biased toward pro residues. Transmembrane regions (helical) follow at residues 181 to 201 (ILPV…AGPL), 219 to 239 (AAIQ…AFAV), 253 to 273 (FAVL…LGII), 303 to 322 (LLCE…KNNP), 323 to 343 (LTCI…LIFL), 403 to 423 (YVFV…TFLI), 431 to 451 (VIGA…FATA), 462 to 482 (AGAA…VVYL), 493 to 513 (LFAF…YSAI), 530 to 550 (IGAT…AVAV), and 557 to 577 (HFGA…GMYC).

Belongs to the ferroportin (FP) (TC 2.A.100) family. SLC40A subfamily.

Its subcellular location is the membrane. It localises to the plastid. It is found in the chloroplast envelope. May be involved in iron transport and iron homeostasis. This chain is Solute carrier family 40 member 3, chloroplastic, found in Oryza sativa subsp. japonica (Rice).